A 486-amino-acid chain; its full sequence is Maintenance of mitochondrial morphology protein 1 (486 aa).

Over 1-19 (MSNDTSAQPAQSSLSFTQG) the chain is Lumenal. A helical membrane pass occupies residues 20-40 (LLVGQLSVVLLIGAFIKFFIF). At 41 to 486 (GEASPSSSRS…GSLPDVVPVT (446 aa)) the chain is on the cytoplasmic side. Disordered stretches follow at residues 45–98 (PSSS…RSIL), 269–318 (QTST…AGTT), 393–412 (VRGQEEQQEVGSSGNAGVST), and 420–486 (ARDA…VPVT). Residues 51–61 (QTRRTSPHKRS) show a composition bias toward basic residues. Basic and acidic residues predominate over residues 70-79 (LGSRSLKEKP). Polar residues-rich tracts occupy residues 80-96 (SSNVLRPVPSSSTNTRS), 269-291 (QTSTHLATSPSNIDPTLQTNDYS), 307-318 (EQATQANNAGTT), and 401-412 (EVGSSGNAGVST). The 258-residue stretch at 125-382 (QPESLDWFNV…EPRVQVVALP (258 aa)) folds into the SMP-LTD domain. Composition is skewed to basic and acidic residues over residues 429–440 (HATRDADMEGLR) and 462–473 (DSREQACRDDPF).

The protein belongs to the MMM1 family. As to quaternary structure, homodimer. Component of the ER-mitochondria encounter structure (ERMES) or MDM complex, composed of MMM1, MDM10, MDM12 and MDM34. An MMM1 homodimer associates with one molecule of MDM12 on each side in a pairwise head-to-tail manner, and the SMP-LTD domains of MMM1 and MDM12 generate a continuous hydrophobic tunnel for phospholipid trafficking.

It is found in the endoplasmic reticulum membrane. In terms of biological role, component of the ERMES/MDM complex, which serves as a molecular tether to connect the endoplasmic reticulum (ER) and mitochondria. Components of this complex are involved in the control of mitochondrial shape and protein biogenesis, and function in nonvesicular lipid trafficking between the ER and mitochondria. The MDM12-MMM1 subcomplex functions in the major beta-barrel assembly pathway that is responsible for biogenesis of all outer membrane beta-barrel proteins, and acts in a late step after the SAM complex. The MDM10-MDM12-MMM1 subcomplex further acts in the TOM40-specific pathway after the action of the MDM12-MMM1 complex. Essential for establishing and maintaining the structure of mitochondria and maintenance of mtDNA nucleoids. The protein is Maintenance of mitochondrial morphology protein 1 of Coccidioides immitis (strain RS) (Valley fever fungus).